Consider the following 640-residue polypeptide: MAAELLFNCEVCVQVRSQACEERRLNVRVNVELLSISNPVHKKDLAVRLTDDADPFFLYNLVISEEDFQSLKSQQGLLVDFSAFPQKFIDLLQQCIQEQNKDIPRFLLQLVYSGSVLDHTPVSLNVVETNPFKHLTHLSLKFLPGNDAEIKKFLARCLKCLKEDKMTLEDKLRKTEEDFTRQLSYTQQSLSEKSRELDKLKNEWTSYTAALTSKHTQELTAEKERALQAQTQYQQQHEQQKKELESLHQRSIQQLQNRLSELEVINKDLTERRYKGDSTVRELKAKLSGVEDECQRAKQEVVSLRRENTTLDAECHEKEKFINQLQTRVAVLEQEIKDKDQLVIRTKEVLDATQEQKVILEENTEKKQSHIEKLETTIKSLSAELLKANEIIKKLQEDLKTLMSKLKLKNTVTIQQEKLLAEKEERLQKEQRELQETGQSLRMKEQEVCKLQEQLETTIQKLEESKQLLKTNENVITWLNKQLNEVQMLKRMETPSSMHGGIRTALSPHGMLERPSFPSSGISHTISPFYAFQKFAEPAHNKNPSPHCPVPKIQFNSQVSKIDQHSDVQVVTAATGHPANKENGDNLGLESKYFKKKEDSIPLRGLSQNTLNSENLKPYLPKVQPSLPAAVTTTSAYFPG.

The PISA domain maps to 40–92 (VHKKDLAVRLTDDADPFFLYNLVISEEDFQSLKSQQGLLVDFSAFPQKFIDLL). Residues 154–475 (LARCLKCLKE…KQLLKTNENV (322 aa)) adopt a coiled-coil conformation.

In terms of assembly, nine homodimers form a cartwheel structure with an internal diameter of 23 nM and radial spokes connecting to the microtubule triplets.

It localises to the cytoplasm. Its subcellular location is the cytoskeleton. The protein localises to the microtubule organizing center. It is found in the centrosome. Central scaffolding component of the centrioles ensuring their 9-fold symmetry. Required for centrosome biogenesis and duplication: required both for mother-centriole-dependent centriole duplication and deuterosome-dependent centriole amplification in multiciliated cells. The sequence is that of Spindle assembly abnormal protein 6 homolog (SASS6) from Gallus gallus (Chicken).